Reading from the N-terminus, the 179-residue chain is Large ribosomal subunit protein uL6 (179 aa).

This sequence belongs to the universal ribosomal protein uL6 family. Part of the 50S ribosomal subunit.

Functionally, this protein binds to the 23S rRNA, and is important in its secondary structure. It is located near the subunit interface in the base of the L7/L12 stalk, and near the tRNA binding site of the peptidyltransferase center. This Trichodesmium erythraeum (strain IMS101) protein is Large ribosomal subunit protein uL6.